The primary structure comprises 89 residues: Small ribosomal subunit protein uS15 (89 aa).

Residues 1-23 form a disordered region; sequence MTLNTEAKQKIINKHQTHGTDTG.

It belongs to the universal ribosomal protein uS15 family. As to quaternary structure, part of the 30S ribosomal subunit. Forms a bridge to the 50S subunit in the 70S ribosome, contacting the 23S rRNA.

One of the primary rRNA binding proteins, it binds directly to 16S rRNA where it helps nucleate assembly of the platform of the 30S subunit by binding and bridging several RNA helices of the 16S rRNA. Its function is as follows. Forms an intersubunit bridge (bridge B4) with the 23S rRNA of the 50S subunit in the ribosome. This chain is Small ribosomal subunit protein uS15, found in Prochlorococcus marinus (strain SARG / CCMP1375 / SS120).